Consider the following 670-residue polypeptide: DEAD-box ATP-dependent RNA helicase 16 (670 aa).

Positions Met-1–Met-10 are enriched in low complexity. The disordered stretch occupies residues Met-1–Leu-97. Composition is skewed to basic and acidic residues over residues Ala-18–Ala-30 and Asn-40–Glu-49. Residues Val-92–Arg-120 carry the Q motif motif. The Helicase ATP-binding domain maps to Ile-123–Leu-306. An ATP-binding site is contributed by Ala-136–Thr-143. The DEAD box motif lies at Asp-254 to Asp-257. Positions Leu-340 to Val-523 constitute a Helicase C-terminal domain. The tract at residues Asp-616 to Ser-670 is disordered. Positions Lys-654–Ser-670 are enriched in basic and acidic residues.

The protein belongs to the DEAD box helicase family. DDX56/DBP9 subfamily.

It catalyses the reaction ATP + H2O = ADP + phosphate + H(+). This is DEAD-box ATP-dependent RNA helicase 16 from Oryza sativa subsp. japonica (Rice).